Consider the following 217-residue polypeptide: Uracil-DNA glycosylase (217 aa).

Aspartate 62 functions as the Proton acceptor in the catalytic mechanism.

It belongs to the uracil-DNA glycosylase (UDG) superfamily. UNG family.

It is found in the cytoplasm. The enzyme catalyses Hydrolyzes single-stranded DNA or mismatched double-stranded DNA and polynucleotides, releasing free uracil.. Its function is as follows. Excises uracil residues from the DNA which can arise as a result of misincorporation of dUMP residues by DNA polymerase or due to deamination of cytosine. This chain is Uracil-DNA glycosylase, found in Streptococcus thermophilus (strain ATCC BAA-491 / LMD-9).